The chain runs to 743 residues: MNAESGENAGGGCPLGHGAGAPRKRPSNRDWWPEALSLTSLNQHSPRSNPYGGDFDYAAEFNSLDLDAVIADLHKVMTDSQDWWPADFGHYGGLFIRMAWHSAGTYRITDGRGGAGGGQQRFAPLNSWPDNASLDKARRLLWPIKQKYGRKLSWADLFVLTGNVALESMGFKTFGFGGGRADTWEPEELFWGPEGTWLGDERYSGERQLHPGLGAVQMGLIYVNPEGPNGNPDPKAAAVDIRETFARMAMNDYETVALIAGGHTFGKTHGAGDPSFIGPEPEGALIEDQGLGWRSKFQTGIGPDAITSGLEVIWSQTPVKWSNYFFENLFNFEWELTKSPAGAHQWVAKDAPEIIPDPFDPNKKRKPTMLTTDLSLRFDPIYEPISRHFLENPDEFADAFARAWFKLTHRDMGPIARYLGPLVPKEQLIWQDPIPERDHPVIDDADIASLKQKILGLGFSVSDLVSVAWASAATYRGSDKRGGANGARIRFAPQKDWEINNPPLLAQVLQKLGEIQSDFNGSATGGKKVSMADLIVLAGCAAIEKAAQDGGVNVAVPFTPGRMDALEEWTDAQSFEALRPVADGFRNYYHESHFMAPEEALVDKAHLLRLSAPEMTVLVGGMRVLGANAGGSQDGVFTHRVGVLSNDFFVNLLDMKNEWTATEHKNRFQGLDRKTRQPTWTATRVDLIFGSQSELRAQAEVYGMADGNEKFVRDFAKAWDKVMNADRMDIGKPADQFSQKLSA.

The segment at 1–29 is disordered; that stretch reads MNAESGENAGGGCPLGHGAGAPRKRPSNR. The span at 8–19 shows a compositional bias: gly residues; sequence NAGGGCPLGHGA. Residues 100–222 constitute a cross-link (tryptophyl-tyrosyl-methioninium (Trp-Tyr) (with M-248)); sequence WHSAGTYRIT…LGAVQMGLIY (123 aa). The Proton acceptor role is filled by His101. Positions 222–248 form a cross-link, tryptophyl-tyrosyl-methioninium (Tyr-Met) (with W-100); the sequence is YVNPEGPNGNPDPKAAAVDIRETFARM. Heme b is bound at residue His263.

The protein belongs to the peroxidase family. Peroxidase/catalase subfamily. Homodimer or homotetramer. Heme b is required as a cofactor. In terms of processing, formation of the three residue Trp-Tyr-Met cross-link is important for the catalase, but not the peroxidase activity of the enzyme.

The enzyme catalyses H2O2 + AH2 = A + 2 H2O. It carries out the reaction 2 H2O2 = O2 + 2 H2O. Its function is as follows. Bifunctional enzyme with both catalase and broad-spectrum peroxidase activity. The chain is Catalase-peroxidase from Stutzerimonas stutzeri (strain A1501) (Pseudomonas stutzeri).